A 302-amino-acid polypeptide reads, in one-letter code: uncharacterized protein (302 aa).

This is an uncharacterized protein from Ictaluridae (bullhead catfishes).